Consider the following 352-residue polypeptide: UDP-N-acetylglucosamine--N-acetylmuramyl-(pentapeptide) pyrophosphoryl-undecaprenol N-acetylglucosamine transferase (352 aa).

Residues Ser195 and Gln287 each coordinate UDP-N-acetyl-alpha-D-glucosamine.

Belongs to the glycosyltransferase 28 family. MurG subfamily.

The protein localises to the cell membrane. The enzyme catalyses Mur2Ac(oyl-L-Ala-gamma-D-Glu-L-Lys-D-Ala-D-Ala)-di-trans,octa-cis-undecaprenyl diphosphate + UDP-N-acetyl-alpha-D-glucosamine = beta-D-GlcNAc-(1-&gt;4)-Mur2Ac(oyl-L-Ala-gamma-D-Glu-L-Lys-D-Ala-D-Ala)-di-trans,octa-cis-undecaprenyl diphosphate + UDP + H(+). Its pathway is cell wall biogenesis; peptidoglycan biosynthesis. Its function is as follows. Cell wall formation. Catalyzes the transfer of a GlcNAc subunit on undecaprenyl-pyrophosphoryl-MurNAc-pentapeptide (lipid intermediate I) to form undecaprenyl-pyrophosphoryl-MurNAc-(pentapeptide)GlcNAc (lipid intermediate II). In Streptococcus pneumoniae (strain Taiwan19F-14), this protein is UDP-N-acetylglucosamine--N-acetylmuramyl-(pentapeptide) pyrophosphoryl-undecaprenol N-acetylglucosamine transferase.